The sequence spans 95 residues: Putative RelE-like toxin protein (95 aa).

Belongs to the RelE toxin family.

Its function is as follows. Toxic component of a type II toxin-antitoxin (TA) system. This is Putative RelE-like toxin protein from Escherichia coli.